A 144-amino-acid chain; its full sequence is UPF0102 protein BURPS668_3819 (144 aa).

Residues 1–28 (MCHAREASLGTGEPEAAPRDNFPREAGS) are disordered. Residues 16 to 28 (AAPRDNFPREAGS) are compositionally biased toward basic and acidic residues.

Belongs to the UPF0102 family.

The sequence is that of UPF0102 protein BURPS668_3819 from Burkholderia pseudomallei (strain 668).